The chain runs to 233 residues: Large ribosomal subunit protein uL2 (233 aa).

The segment at 194–233 is disordered; that stretch reads HPHGGGNHQHVGRPSTVGRGTPPGRKVGRLSPKRRKKYGR. Positions 219–233 are enriched in basic residues; that stretch reads KVGRLSPKRRKKYGR.

It belongs to the universal ribosomal protein uL2 family. Part of the 50S ribosomal subunit. Forms a bridge to the 30S subunit in the 70S ribosome.

Its function is as follows. One of the primary rRNA binding proteins. Required for association of the 30S and 50S subunits to form the 70S ribosome, for tRNA binding and peptide bond formation. It has been suggested to have peptidyltransferase activity; this is somewhat controversial. Makes several contacts with the 16S rRNA in the 70S ribosome. In Picrophilus torridus (strain ATCC 700027 / DSM 9790 / JCM 10055 / NBRC 100828 / KAW 2/3), this protein is Large ribosomal subunit protein uL2.